An 88-amino-acid chain; its full sequence is MALKERLGTVVSDKMDKTVVVAVENRFPHPIYQKTVSRTTRYKAHDAGNTCRIGDRVRITETRPISRSKRWTVAEVLSHSPKAQEVST.

Belongs to the universal ribosomal protein uS17 family. As to quaternary structure, part of the 30S ribosomal subunit.

In terms of biological role, one of the primary rRNA binding proteins, it binds specifically to the 5'-end of 16S ribosomal RNA. This chain is Small ribosomal subunit protein uS17, found in Prochlorococcus marinus (strain MIT 9303).